The sequence spans 667 residues: MNETNVNNNNQSNEEVEEINDEFKLYYDGLQESKHMKYYTNSFKSYENKQHKRVSSTLVPLKSEDLQSIRINTIHILAWKLNLMAVSYNSKFIFTAESDVINVRNIDNPNIIIKTFAMDTMEMTINQIRLGILDGEEVLVSVDEGGFVRIIFVNDFEREVIRLYNHGVSTWGIAICPSKPLIAVSSNSHKITIWNLDDENPQETKFLLPKHKHNIPSIDFSPCGNYLVSVSIDKNIRIWDVNKRQLLRIQTLAQWCWACRWIDLTTKEDQLYQYYNNSSNSRDNNNNNSNSNNNGGGGIIIDKSWRGLTQHEEQQLVENNQEVEPMPEEEEEEEEEEVNQVDNDDEIFQENDDNEENEENTEFLNEANDGVDDDDDLIIQNGVFTNEDDIIFDGGLPPINQHQQQQQQNQEIEEEGQEGQEEQEDGTENENNQGTIATTTTTTTTIINSIKKLEDAINQQRIENNRINSKVPLDKNKLPSNVVFSTYQNLYLSDVEMDLLLTMNNAIPTSFPIIQTQIDRIAFLEVVPELSLVIAASQGPARLISLYRIVKQIPLNNNINNNENNNNENNDNNLNEPETNMFLESVLSPPSGGPGLIVGLSVVKNYVKNNPLAFSINLYVMYINGIFINFHIKRSTIRNKPIHQNSTFFDPINKCNIFGLDITSFGV.

WD repeat units follow at residues 165–204 (NHGV…PQET) and 210–249 (KHKH…LLRI). Positions 278-293 (SSNSRDNNNNNSNSNN) are enriched in low complexity. Disordered regions lie at residues 278–301 (SSNS…GIII), 316–345 (LVEN…DNDD), and 389–440 (DIIF…ATTT). Residues 325 to 345 (PMPEEEEEEEEEEVNQVDNDD) show a composition bias toward acidic residues. A compositionally biased stretch (low complexity) spans 400–410 (NQHQQQQQQNQ). Over residues 411–428 (EIEEEGQEGQEEQEDGTE) the composition is skewed to acidic residues. Over residues 429–440 (NENNQGTIATTT) the composition is skewed to low complexity.

The protein is WD40 repeat-containing protein DDB_G0271002 of Dictyostelium discoideum (Social amoeba).